Reading from the N-terminus, the 477-residue chain is RTX-III toxin determinant D (477 aa).

At 1–59 the chain is on the cytoplasmic side; the sequence is MKLWILGLGEFFQRYRNIWREIWKIRKQLDTPARQKDENEFLPRHLELIETPISKKPRL. Residues 60–77 form a helical membrane-spanning segment; that stretch reads IAYLIMLFLFLAIVISII. Topologically, residues 78-477 are periplasmic; the sequence is SKVEIVASAT…ESITESLRER (400 aa).

The protein belongs to the membrane fusion protein (MFP) (TC 8.A.1) family.

The protein localises to the cell inner membrane. Its function is as follows. Involved in the transport of the toxin RTX-III. This Actinobacillus pleuropneumoniae (Haemophilus pleuropneumoniae) protein is RTX-III toxin determinant D (apxIIID).